The primary structure comprises 354 residues: Protein Wnt-11 (354 aa).

The N-terminal stretch at 1–24 (MKPSPQFLLAAFLSLILQTGICYG) is a signal peptide. N-linked (GlcNAc...) asparagine glycans are attached at residues Asn-40 and Asn-90. 11 cysteine pairs are disulfide-bonded: Cys-80-Cys-91, Cys-130-Cys-138, Cys-140-Cys-157, Cys-209-Cys-223, Cys-211-Cys-218, Cys-283-Cys-314, Cys-299-Cys-309, Cys-313-Cys-353, Cys-329-Cys-344, Cys-331-Cys-341, and Cys-336-Cys-337. A lipid anchor (O-palmitoleoyl serine; by PORCN) is attached at Ser-215. 2 N-linked (GlcNAc...) asparagine glycosylation sites follow: Asn-300 and Asn-304.

It belongs to the Wnt family. Post-translationally, palmitoleoylation is required for efficient binding to frizzled receptors. Depalmitoleoylation leads to Wnt signaling pathway inhibition.

Its subcellular location is the secreted. The protein localises to the extracellular space. It is found in the extracellular matrix. Its function is as follows. Ligand for members of the frizzled family of seven transmembrane receptors. May play a role in the formation of dermal structure, both limb and feather buds. Is likely to signal over only few cell diameters. The polypeptide is Protein Wnt-11 (WNT11) (Coturnix japonica (Japanese quail)).